Reading from the N-terminus, the 422-residue chain is Protein phosphatase 1 regulatory subunit 36 (422 aa).

As to quaternary structure, interacts with PPP1CA.

Inhibits phosphatase activity of protein phosphatase 1 (PP1) complexes. This chain is Protein phosphatase 1 regulatory subunit 36 (PPP1R36), found in Homo sapiens (Human).